Here is a 289-residue protein sequence, read N- to C-terminus: D-alanine aminotransferase (289 aa).

Residue Y31 coordinates substrate. R50 serves as a coordination point for pyridoxal 5'-phosphate. Substrate-binding residues include R99 and H101. K147 serves as the catalytic Proton acceptor. K147 is modified (N6-(pyridoxal phosphate)lysine). E179 serves as a coordination point for pyridoxal 5'-phosphate.

This sequence belongs to the class-IV pyridoxal-phosphate-dependent aminotransferase family. Homodimer. Pyridoxal 5'-phosphate serves as cofactor.

The enzyme catalyses D-alanine + 2-oxoglutarate = D-glutamate + pyruvate. In terms of biological role, acts on the D-isomers of alanine, leucine, aspartate, glutamate, aminobutyrate, norvaline and asparagine. The enzyme transfers an amino group from a substrate D-amino acid to the pyridoxal phosphate cofactor to form pyridoxamine and an alpha-keto acid in the first half-reaction. The second half-reaction is the reverse of the first, transferring the amino group from the pyridoxamine to a second alpha-keto acid to form the product D-amino acid via a ping-pong mechanism. This is an important process in the formation of D-alanine and D-glutamate, which are essential bacterial cell wall components. The chain is D-alanine aminotransferase (dat) from Listeria innocua serovar 6a (strain ATCC BAA-680 / CLIP 11262).